A 279-amino-acid chain; its full sequence is Energy-coupling factor transporter ATP-binding protein EcfA (279 aa).

In terms of domain architecture, ABC transporter spans 4-239 (VETKDLYFRY…VETIRKANLR (236 aa)). 37–44 (GPNGAGKS) contributes to the ATP binding site.

It belongs to the ABC transporter superfamily. Energy-coupling factor EcfA family. In terms of assembly, forms a stable energy-coupling factor (ECF) transporter complex composed of 2 membrane-embedded substrate-binding proteins (S component), 2 ATP-binding proteins (A component) and 2 transmembrane proteins (T component).

Its subcellular location is the cell membrane. ATP-binding (A) component of a common energy-coupling factor (ECF) ABC-transporter complex. Unlike classic ABC transporters this ECF transporter provides the energy necessary to transport a number of different substrates. This Methanocaldococcus jannaschii (strain ATCC 43067 / DSM 2661 / JAL-1 / JCM 10045 / NBRC 100440) (Methanococcus jannaschii) protein is Energy-coupling factor transporter ATP-binding protein EcfA.